We begin with the raw amino-acid sequence, 180 residues long: MSDKPLPSSFDSDPEFFEENPWVKLRRRLREEPLIPLGCAATSYALWRAYKSMKAGDSDQLNRMFRYRIYAQAFTLVAVVVGGIYYKSERAQRKELERAMEEKKSQAKRDAWLRELEIRDQEDRDWRERHAAVERAAKEAGMKPKDVSKGLAGESAGNQEGEAKSNVGVLDAVKNLVKEK.

An HIG1 domain is found at 6 to 97; that stretch reads LPSSFDSDPE…SERAQRKELE (92 aa). The next 2 helical transmembrane spans lie at 34–50 and 69–86; these read LIPL…WRAY and IYAQ…GIYY. Residues 84–111 adopt a coiled-coil conformation; that stretch reads IYYKSERAQRKELERAMEEKKSQAKRDA. Residues 135–148 are compositionally biased toward basic and acidic residues; the sequence is RAAKEAGMKPKDVS. The segment at 135–165 is disordered; it reads RAAKEAGMKPKDVSKGLAGESAGNQEGEAKS.

This sequence belongs to the RCF1 family. As to quaternary structure, associates with the respiratory chain complex III/complex IV supercomplex.

The protein localises to the mitochondrion membrane. Its function is as follows. Cytochrome c oxidase subunit which plays a role in assembly of respiratory supercomplexes. In Coccidioides posadasii (strain C735) (Valley fever fungus), this protein is Respiratory supercomplex factor 1, mitochondrial (RCF1).